Here is a 147-residue protein sequence, read N- to C-terminus: Hemoglobin subunit beta (147 aa).

The residue at position 2 (V2) is an N-acetylvaline. Residues 3-147 (HLTGEEKSAV…VANALAHKYH (145 aa)) form the Globin domain. T13 is modified (phosphothreonine). Phosphoserine is present on S45. K60 is modified (N6-acetyllysine). Heme b is bound at residue H64. Residue K83 is modified to N6-acetyllysine. H93 is a binding site for heme b. The residue at position 94 (C94) is an S-nitrosocysteine. Position 145 is an N6-acetyllysine (K145).

The protein belongs to the globin family. Heterotetramer of two alpha chains and two beta chains. As to expression, red blood cells.

Involved in oxygen transport from the lung to the various peripheral tissues. The polypeptide is Hemoglobin subunit beta (HBB) (Ateles paniscus (Black spider monkey)).